We begin with the raw amino-acid sequence, 44 residues long: uncharacterized protein (44 aa).

This is an uncharacterized protein from Treponema pallidum (strain Nichols).